The chain runs to 380 residues: L-lactate dehydrogenase (380 aa).

In terms of domain architecture, FMN hydroxy acid dehydrogenase spans 1–380 (MIISSTTDFR…DRSILAKTDR (380 aa)). Tyrosine 24 lines the substrate pocket. The FMN site is built by serine 106 and glutamine 127. Residue tyrosine 129 participates in substrate binding. Threonine 155 is an FMN binding site. Substrate is bound at residue arginine 164. FMN is bound at residue lysine 251. The Proton acceptor role is filled by histidine 275. Arginine 278 is a substrate binding site. 306–330 (DGGVRSGLDVVRMLALGAKGVLLGR) contacts FMN.

Belongs to the FMN-dependent alpha-hydroxy acid dehydrogenase family. FMN serves as cofactor.

It is found in the cell inner membrane. It catalyses the reaction (S)-lactate + A = pyruvate + AH2. Functionally, catalyzes the conversion of L-lactate to pyruvate. Is coupled to the respiratory chain. The sequence is that of L-lactate dehydrogenase from Caulobacter sp. (strain K31).